The primary structure comprises 843 residues: Tetratricopeptide repeat protein 7B (843 aa).

Residues 97–131 form a TPR 1 repeat; that stretch reads QESNLVMAKLTYVEGDYKEALNIYARVGLDDLPLT. A phosphoserine mark is found at Ser-160 and Ser-202. TPR repeat units follow at residues 219-252, 363-396, 397-430, 479-514, 516-548, and 549-582; these read ETGL…VETR, SVVY…AFEE, FHLW…KPDD, TYSL…SPTD, QAAF…QGDD, and ANSL…YPEN. Ser-625, Ser-629, Ser-630, Ser-673, Ser-677, Ser-678, and Ser-681 each carry phosphoserine. 4 TPR repeats span residues 696 to 729, 730 to 763, 765 to 797, and 798 to 831; these read AQIW…FPMS, HNVL…SPTH, KSMQ…NSTA, and HEVW…EASS.

Component of a phosphatidylinositol 4-kinase (PI4K) complex, composed of PI4KA, EFR3 (EFR3A or EFR3B), TTC7 (TTC7A or TTC7B) and HYCC (HYCC1 or HYCC2). Interacts with PI4KA, interaction is direct. Interacts with EFR3 (EFR3A or EFR3B), interaction is direct. Interacts with HYCC (HYCC1 or HYCC2), interaction is direct. Association with the PI4K complex is strongly reduced by TMEM150A.

It is found in the cytoplasm. The protein localises to the cytosol. The protein resides in the cell membrane. In terms of biological role, component of a complex required to localize phosphatidylinositol 4-kinase (PI4K) to the plasma membrane. The complex acts as a regulator of phosphatidylinositol 4-phosphate (PtdIns(4)P) synthesis. In the complex, plays a central role in bridging PI4KA to EFR3B and HYCC1, via direct interactions. The protein is Tetratricopeptide repeat protein 7B of Mus musculus (Mouse).